A 562-amino-acid polypeptide reads, in one-letter code: Zinc finger protein 579 (562 aa).

Residues 1–11 show a composition bias toward pro residues; it reads MDPQPPPPAQG. Residues 1–43 form a disordered region; that stretch reads MDPQPPPPAQGSPPHRGRGRGRGRGRGRGRGRGRGGAGAPRAP. The segment covering 15–33 has biased composition (basic residues); sequence HRGRGRGRGRGRGRGRGRG. C2H2-type zinc fingers lie at residues 44-66, 72-94, and 100-123; these read LPCPTCGRLFRFPYYLSRHRLSH, HACPLCPKAFRRPAHLSRHLRGH, and LRCAACPRTFPEPAQLRRHLAQEH. Arg-92 is subject to Omega-N-methylarginine. Positions 139–203 are disordered; that stretch reads TAEPSWGPQD…SESEEAEAGA (65 aa). A phosphoserine mark is found at Ser-194 and Ser-196. 2 consecutive C2H2-type zinc fingers follow at residues 270-292 and 298-320; these read HQCSICLKAFARPWSLSRHRLVH and FVCPDCGLAFRLASYLRQHRRVH. Residues 327 to 379 form a disordered region; it reads APLPAAGKKDDKASGARNSAKGPEGGEGAECGGASEGGEGQNGGDAAPARPPA. A compositionally biased stretch (gly residues) spans 349–369; the sequence is PEGGEGAECGGASEGGEGQNG. 3 consecutive C2H2-type zinc fingers follow at residues 384-406, 412-434, and 441-463; these read FWCPECGKGFRRRAHLRQHGVTH, FQCVRCQREFKRLADLARHAQVH, and HPCPRCPRRFSRAYSLLRHQRCH. Residues 477 to 562 are disordered; it reads QAQAPTSPPP…HLRGLGGLAS (86 aa). 2 stretches are compositionally biased toward pro residues: residues 482-491 and 512-525; these read TSPPPPPPPL and PSPGTPPQSPPAPP. At Ser-483 the chain carries Phosphoserine.

Belongs to the krueppel C2H2-type zinc-finger protein family.

The protein resides in the nucleus. May be involved in transcriptional regulation. This is Zinc finger protein 579 (ZNF579) from Homo sapiens (Human).